We begin with the raw amino-acid sequence, 203 residues long: 2-phospho-L-lactate guanylyltransferase (203 aa).

This sequence belongs to the CofC family. As to quaternary structure, homodimer.

It carries out the reaction (2S)-2-phospholactate + GTP + H(+) = (2S)-lactyl-2-diphospho-5'-guanosine + diphosphate. The protein operates within cofactor biosynthesis; coenzyme F420 biosynthesis. In terms of biological role, guanylyltransferase that catalyzes the activation of (2S)-2-phospholactate (2-PL) as (2S)-lactyl-2-diphospho-5'-guanosine, via the condensation of 2-PL with GTP. It is involved in the biosynthesis of coenzyme F420, a hydride carrier cofactor. The protein is 2-phospho-L-lactate guanylyltransferase of Halomicrobium mukohataei (strain ATCC 700874 / DSM 12286 / JCM 9738 / NCIMB 13541) (Haloarcula mukohataei).